The primary structure comprises 186 residues: Large ribosomal subunit protein eL15 (186 aa).

Positions 163 to 186 (RGLTSAGKKGRGLNKKGKGAEKVR) are disordered. Basic residues predominate over residues 170-179 (KKGRGLNKKG).

Belongs to the eukaryotic ribosomal protein eL15 family.

This chain is Large ribosomal subunit protein eL15, found in Methanosphaera stadtmanae (strain ATCC 43021 / DSM 3091 / JCM 11832 / MCB-3).